We begin with the raw amino-acid sequence, 265 residues long: Photosystem II 22 kDa protein, chloroplastic (265 aa).

The N-terminal 59 residues, Met1 to Lys59, are a transit peptide targeting the chloroplast. Repeat copies occupy residues Phe54–Asp158 and Pro159–Glu264. The next 4 helical transmembrane spans lie at Val96–Leu116, Ala130–Gly150, Leu195–Thr215, and Ile229–Ala249.

It belongs to the ELIP/psbS family.

It is found in the plastid. Its subcellular location is the chloroplast thylakoid membrane. Its function is as follows. Plays an important role in non-photochemical quenching (NPQ), a process maintains the balance between dissipation and utilization of light energy to minimize generation of oxidizing molecules, thereby protecting the plant against photo-oxidative damage; acts upstream of DLDG1. Is not necessary for efficient light harvesting and photosynthesis. This chain is Photosystem II 22 kDa protein, chloroplastic, found in Arabidopsis thaliana (Mouse-ear cress).